We begin with the raw amino-acid sequence, 308 residues long: Methionyl-tRNA formyltransferase (308 aa).

Position 109–112 (109–112 (SLLP)) interacts with (6S)-5,6,7,8-tetrahydrofolate.

The protein belongs to the Fmt family.

It carries out the reaction L-methionyl-tRNA(fMet) + (6R)-10-formyltetrahydrofolate = N-formyl-L-methionyl-tRNA(fMet) + (6S)-5,6,7,8-tetrahydrofolate + H(+). Functionally, attaches a formyl group to the free amino group of methionyl-tRNA(fMet). The formyl group appears to play a dual role in the initiator identity of N-formylmethionyl-tRNA by promoting its recognition by IF2 and preventing the misappropriation of this tRNA by the elongation apparatus. The chain is Methionyl-tRNA formyltransferase from Clostridium beijerinckii (strain ATCC 51743 / NCIMB 8052) (Clostridium acetobutylicum).